The chain runs to 265 residues: Undecaprenyl-diphosphatase (265 aa).

Helical transmembrane passes span 42-62 (AATF…VLYW), 82-102 (GIML…AAHS), 108-128 (LFTP…MLLV), 143-163 (MSPA…WPGF), 181-201 (GLAA…ATGY), 221-241 (GFVV…ALVG), and 248-264 (FAWY…YFMA).

This sequence belongs to the UppP family.

The protein localises to the cell inner membrane. It carries out the reaction di-trans,octa-cis-undecaprenyl diphosphate + H2O = di-trans,octa-cis-undecaprenyl phosphate + phosphate + H(+). In terms of biological role, catalyzes the dephosphorylation of undecaprenyl diphosphate (UPP). Confers resistance to bacitracin. The polypeptide is Undecaprenyl-diphosphatase (Nitratidesulfovibrio vulgaris (strain DP4) (Desulfovibrio vulgaris)).